A 1827-amino-acid chain; its full sequence is MARKKFSGLEISLIVLFVIVTIIAIALIVVLATKTPAVDEISDSTSTPATTRVTTNPSDSGKCPNVLNDPVNVRINCIPEQFPTEGICAQRGCCWRPWNDSLIPWCFFVDNHGYNVQDMTTTSIGVEAKLNRIPSPTLFGNDINSVLFTTQNQTPNRFRFKITDPNNRRYEVPHQYVKEFTGPTVSDTLYDVKVAQNPFSIQVIRKSNGKTLFDTSIGPLVYSDQYLQISTRLPSDYIYGIGEQVHKRFRHDLSWKTWPIFTRDQLPGDNNNNLYGHQTFFMCIEDTSGKSFGVFLMNSNAMEIFIQPTPIVTYRVTGGILDFYILLGDTPEQVVQQYQQLVGLPAMPAYWNLGFQLSRWNYKSLDVVKEVVRRNREAGIPFDTQVTDIDYMEDKKDFTYDQVAFNGLPQFVQDLHDHGQKYVIILDPAISIGRRANGTTYATYERGNTQHVWINESDGSTPIIGEVWPGLTVYPDFTNPNCIDWWANECSIFHQEVQYDGLWIDMNEVSSFIQGSTKGCNVNKLNYPPFTPDILDKLMYSKTICMDAVQNWGKQYDVHSLYGYSMAIATEQAVQKVFPNKRSFILTRSTFAGSGRHAAHWLGDNTASWEQMEWSITGMLEFSLFGIPLVGADICGFVAETTEELCRRWMQLGAFYPFSRNHNSDGYEHQDPAFFGQNSLLVKSSRQYLTIRYTLLPFLYTLFYKAHVFGETVARPVLHEFYEDTNSWIEDTEFLWGPALLITPVLKQGADTVSAYIPDAIWYDYESGAKRPWRKQRVDMYLPADKIGLHLRGGYIIPIQEPDVTTTASRKNPLGLIVALGENNTAKGDFFWDDGETKDTIQNGNYILYTFSVSNNTLDIVCTHSSYQEGTTLAFQTVKILGLTDSVTEVRVAENNQPMNAHSNFTYDASNQVLLIADLKLNLGRNFSVQWNQIFSENERFNCYPDADLATEQKCTQRGCVWRTGSSLSKAPECYFPRQDNSYSVNSARYSSMGITADLQLNTANARIKLPSDPISTLRVEVKYHKNDMLQFKIYDPQKKRYEVPVPLNIPTTPISTYEDRLYDVEIKENPFGIQIRRRSSGRVIWDSWLPGFAFNDQFIQISTRLPSEYIYGFGEVEHTAFKRDLNWNTWGMFTRDQPPGYKLNSYGFHPYYMALEEEGNAHGVFLLNSNAMDVTFQPTPALTYRTVGGILDFYMFLGPTPEVATKQYHEVIGHPVMPAYWALGFQLCRYGYANTSEVRELYDAMVAANIPYDVQYTDIDYMERQLDFTIGEAFQDLPQFVDKIRGEGMRYIIILDPAISGNETKTYPAFERGQQNDVFVKWPNTNDICWAKVWPDLPNITIDKTLTEDEAVNASRAHVAFPDFFRTSTAEWWAREIVDFYNEKMKFDGLWIDMNEPSSFVNGTTTNQCRNDELNYPPYFPELTKRTDGLHFRTICMEAEQILSDGTSVLHYDVHNLYGWSQMKPTHDALQKTTGKRGIVISRSTYPTSGRWGGHWLGDNYARWDNMDKSIIGMMEFSLFGMSYTGADICGFFNNSEYHLCTRWMQLGAFYPYSRNHNIANTRRQDPASWNETFAEMSRNILNIRYTLLPYFYTQMHEIHANGGTVIRPLLHEFFDEKPTWDIFKQFLWGPAFMVTPVLEPYVQTVNAYVPNARWFDYHTGKDIGVRGQFQTFNASYDTINLHVRGGHILPCQEPAQNTFYSRQKHMKLIVAADDNQMAQGSLFWDDGESIDTYERDLYLSVQFNLNQTTLTSTILKRGYINKSETRLGSLHVWGKGTTPVNAVTLTYNGNKNSLPFNEDTTNMILRIDLTTHNVTLEEPIEINWS.

Topologically, residues 2–12 (ARKKFSGLEIS) are cytoplasmic. Ser7 bears the Phosphoserine; by PKA mark. The chain crosses the membrane as a helical; Signal-anchor for type II membrane protein span at residues 13–32 (LIVLFVIVTIIAIALIVVLA). The Lumenal segment spans residues 33–1827 (TKTPAVDEIS…LEEPIEINWS (1795 aa)). Residues 40–61 (EISDSTSTPATTRVTTNPSDSG) are disordered. Low complexity predominate over residues 45–55 (TSTPATTRVTT). The region spanning 61–110 (GKCPNVLNDPVNVRINCIPEQFPTEGICAQRGCCWRPWNDSLIPWCFFVD) is the P-type 1 domain. 3 disulfide bridges follow: Cys63-Cys94, Cys77-Cys93, and Cys88-Cys106. N-linked (GlcNAc...) asparagine glycosylation occurs at Asn99. Residues 110–1007 (DNHGYNVQDM…DLQLNTANAR (898 aa)) are isomaltase. A sulfotyrosine mark is found at Tyr237 and Tyr239. Residues Asp264 and Asp388 each contribute to the substrate site. Sulfotyrosine is present on residues Tyr391 and Tyr400. N-linked (GlcNAc...) asparagine glycans are attached at residues Asn437 and Asn455. The active-site Nucleophile; for isomaltase activity is the Asp505. Residues Cys520 and Cys545 are joined by a disulfide bond. Arg588 is a substrate binding site. Asp604 (for isomaltase activity) is an active-site residue. Cys635 and Cys646 are oxidised to a cystine. His662 is a binding site for substrate. A sulfotyrosine mark is found at Tyr667, Tyr763, and Tyr765. N-linked (GlcNAc...) asparagine glycans are attached at residues Asn823, Asn855, Asn904, and Asn926. The region spanning 932-978 (NQIFSENERFNCYPDADLATEQKCTQRGCVWRTGSSLSKAPECYFPR) is the P-type 2 domain. A sucrase region spans residues 1008 to 1827 (IKLPSDPIST…LEEPIEINWS (820 aa)). 4 N-linked (GlcNAc...) asparagine glycosylation sites follow: Asn1235, Asn1303, Asn1340, and Asn1354. Asp1394 (nucleophile; for sucrase activity) is an active-site residue. Glu1397 serves as the catalytic For sucrase activity. The N-linked (GlcNAc...) asparagine glycan is linked to Asn1403. Asp1500 serves as the catalytic Proton donor; for isomaltase activity. 6 N-linked (GlcNAc...) asparagine glycosylation sites follow: Asn1535, Asn1572, Asn1675, Asn1748, Asn1763, and Asn1815.

It belongs to the glycosyl hydrolase 31 family. The resulting sucrase and isomaltase subunits stay associated with one another in a complex by non-covalent linkages. In terms of processing, the precursor is proteolytically cleaved when exposed to pancreatic proteases in the intestinal lumen. Sulfated. In terms of tissue distribution, expressed in the poorly differentiated crypt cells of the small intestine as well as in the mature villous cells. Expressed at very low levels in the colon.

Its subcellular location is the apical cell membrane. The catalysed reaction is Hydrolysis of sucrose and maltose by an alpha-D-glucosidase-type action.. The enzyme catalyses Hydrolysis of (1-&gt;6)-alpha-D-glucosidic linkages in some oligosaccharides produced from starch and glycogen by alpha-amylase, and in isomaltose.. In terms of biological role, plays an important role in the final stage of carbohydrate digestion. Isomaltase activity is specific for both alpha-1,4- and alpha-1,6-oligosaccharides. The sequence is that of Sucrase-isomaltase, intestinal (SI) from Homo sapiens (Human).